Reading from the N-terminus, the 342-residue chain is 4-hydroxy-2-oxovalerate aldolase (342 aa).

One can recognise a Pyruvate carboxyltransferase domain in the interval 7 to 257 (VWITEVALRD…KTGIDLYKMM (251 aa)). 15 to 16 (RD) is a binding site for substrate. D16 is a binding site for Mn(2+). H19 acts as the Proton acceptor in catalysis. Residues S169 and H196 each contribute to the substrate site. Mn(2+) is bound by residues H196 and H198. Y287 provides a ligand contact to substrate.

The protein belongs to the 4-hydroxy-2-oxovalerate aldolase family.

The enzyme catalyses (S)-4-hydroxy-2-oxopentanoate = acetaldehyde + pyruvate. The polypeptide is 4-hydroxy-2-oxovalerate aldolase (pheE) (Geobacillus stearothermophilus (Bacillus stearothermophilus)).